Reading from the N-terminus, the 375-residue chain is Tyrosine--tRNA ligase (375 aa).

L-tyrosine is bound by residues Tyr-37, Tyr-168, Gln-172, Asp-175, and Gln-190. The short motif at 251-255 is the 'KMSKS' region element; the sequence is KMSKS. Residue Lys-254 participates in ATP binding.

The protein belongs to the class-I aminoacyl-tRNA synthetase family. TyrS type 4 subfamily. As to quaternary structure, homodimer.

Its subcellular location is the cytoplasm. The enzyme catalyses tRNA(Tyr) + L-tyrosine + ATP = L-tyrosyl-tRNA(Tyr) + AMP + diphosphate + H(+). Its function is as follows. Catalyzes the attachment of tyrosine to tRNA(Tyr) in a two-step reaction: tyrosine is first activated by ATP to form Tyr-AMP and then transferred to the acceptor end of tRNA(Tyr). The polypeptide is Tyrosine--tRNA ligase (Pyrococcus furiosus (strain ATCC 43587 / DSM 3638 / JCM 8422 / Vc1)).